Reading from the N-terminus, the 435-residue chain is MTQTVNVIGAGLAGSEAAYQLAERGIKVNLIEMRPVKQTPAHHTDKFAELVCSNSLRGNALTNGVGVLKEEMRRLNSIIIEAADKARVPAGGALAVDRHDFSGYITETLKNHENITVINEEINAIPDGYTIIATGPLTTETLAQEIVDITGKDQLYFYDAAAPIIEKESIDMDKVYLKSRYDKGEAAYLNCPMTEDEFNRFYDAVLEAEVAPVNSFEKEKYFEGCMPFEVMAERGRKTLLFGPMKPVGLEDPKTGKRPYAVVQLRQDDAAGTLYNIVGFQTHLKWGAQKEVIKLIPGLENVDIVRYGVMHRNTFINSPDVLNEKYELISQPNIQFAGQMTGVEGYVESAASGLVAGINLAHKILGKGEVVFPRETMIGSMAYYISHAKNNKNFQPMNANFGLLPSLETRIKDKKERYEAQANRALDYLENFKKTL.

9-14 (GAGLAG) contributes to the FAD binding site.

This sequence belongs to the MnmG family. TrmFO subfamily. Requires FAD as cofactor.

Its subcellular location is the cytoplasm. It catalyses the reaction uridine(54) in tRNA + (6R)-5,10-methylene-5,6,7,8-tetrahydrofolate + NADH + H(+) = 5-methyluridine(54) in tRNA + (6S)-5,6,7,8-tetrahydrofolate + NAD(+). The catalysed reaction is uridine(54) in tRNA + (6R)-5,10-methylene-5,6,7,8-tetrahydrofolate + NADPH + H(+) = 5-methyluridine(54) in tRNA + (6S)-5,6,7,8-tetrahydrofolate + NADP(+). Functionally, catalyzes the folate-dependent formation of 5-methyl-uridine at position 54 (M-5-U54) in all tRNAs. This is Methylenetetrahydrofolate--tRNA-(uracil-5-)-methyltransferase TrmFO from Staphylococcus aureus (strain Newman).